We begin with the raw amino-acid sequence, 63 residues long: Large ribosomal subunit protein uL29 (63 aa).

This sequence belongs to the universal ribosomal protein uL29 family.

In Sulfurovum sp. (strain NBC37-1), this protein is Large ribosomal subunit protein uL29.